Consider the following 171-residue polypeptide: Laminin subunit beta-1 (171 aa).

Positions 1–29 are cleaved as a signal peptide; that stretch reads MNGRTQNLWFSTFRLVIVYALFFAKLCFG. 5 disulfides stabilise this stretch: Cys-59–Cys-69, Cys-72–Cys-81, Cys-84–Cys-100, Cys-103–Cys-118, and Cys-105–Cys-128. Laminin EGF-like domains are found at residues 66 to 102, 103 to 160, and 161 to 171; these read TGVCNNCLHNTKGTNCQLCKDGYYGNALLGTENVCQR, CQCP…TCKK, and CLCNGNINSAS. The N-linked (GlcNAc...) asparagine glycan is linked to Asn-130. Disulfide bonds link Cys-131/Cys-140 and Cys-143/Cys-158.

In terms of assembly, laminin is a complex glycoprotein, consisting of three different polypeptide chains (alpha, beta, gamma), which are bound to each other by disulfide bonds into a cross-shaped molecule comprising one long and three short arms with globules at each end.

It localises to the secreted. It is found in the extracellular space. The protein localises to the extracellular matrix. Its subcellular location is the basement membrane. Functionally, binding to cells via a high affinity receptor, laminin is thought to mediate the attachment, migration and organization of cells into tissues during embryonic development by interacting with other extracellular matrix components. The polypeptide is Laminin subunit beta-1 (Hydra vulgaris (Hydra)).